We begin with the raw amino-acid sequence, 863 residues long: Bifunctional uridylyltransferase/uridylyl-removing enzyme (863 aa).

The uridylyltransferase stretch occupies residues 1 to 328 (MLFSPTLSSL…SSNQDTVIDQ (328 aa)). The interval 329-687 (LDDDFQLINQ…ISNRFSLGGT (359 aa)) is uridylyl-removing. In terms of domain architecture, HD spans 446–568 (VDEHTLRVML…MQNQVRLDYL (123 aa)). ACT domains follow at residues 688 to 764 (EVFI…KLPA) and 794 to 863 (EMEL…QQIR).

This sequence belongs to the GlnD family. Mg(2+) is required as a cofactor.

The enzyme catalyses [protein-PII]-L-tyrosine + UTP = [protein-PII]-uridylyl-L-tyrosine + diphosphate. The catalysed reaction is [protein-PII]-uridylyl-L-tyrosine + H2O = [protein-PII]-L-tyrosine + UMP + H(+). Its activity is regulated as follows. Uridylyltransferase (UTase) activity is inhibited by glutamine, while glutamine activates uridylyl-removing (UR) activity. Functionally, modifies, by uridylylation and deuridylylation, the PII regulatory proteins (GlnB and homologs), in response to the nitrogen status of the cell that GlnD senses through the glutamine level. Under low glutamine levels, catalyzes the conversion of the PII proteins and UTP to PII-UMP and PPi, while under higher glutamine levels, GlnD hydrolyzes PII-UMP to PII and UMP (deuridylylation). Thus, controls uridylylation state and activity of the PII proteins, and plays an important role in the regulation of nitrogen assimilation and metabolism. The chain is Bifunctional uridylyltransferase/uridylyl-removing enzyme from Haemophilus influenzae (strain ATCC 51907 / DSM 11121 / KW20 / Rd).